The following is a 487-amino-acid chain: Galactose-1-phosphate uridylyltransferase (487 aa).

This sequence belongs to the galactose-1-phosphate uridylyltransferase type 2 family.

Its subcellular location is the cytoplasm. The catalysed reaction is alpha-D-galactose 1-phosphate + UDP-alpha-D-glucose = alpha-D-glucose 1-phosphate + UDP-alpha-D-galactose. The protein operates within carbohydrate metabolism; galactose metabolism. This Lactiplantibacillus plantarum (strain ATCC BAA-793 / NCIMB 8826 / WCFS1) (Lactobacillus plantarum) protein is Galactose-1-phosphate uridylyltransferase.